The following is a 165-amino-acid chain: NADPH-dependent 7-cyano-7-deazaguanine reductase (165 aa).

Cys-56 serves as the catalytic Thioimide intermediate. Catalysis depends on Asp-63, which acts as the Proton donor. Residues Val-78–Ser-80 and His-97–Glu-98 contribute to the substrate site.

Belongs to the GTP cyclohydrolase I family. QueF type 1 subfamily.

It localises to the cytoplasm. It carries out the reaction 7-aminomethyl-7-carbaguanine + 2 NADP(+) = 7-cyano-7-deazaguanine + 2 NADPH + 3 H(+). It functions in the pathway tRNA modification; tRNA-queuosine biosynthesis. In terms of biological role, catalyzes the NADPH-dependent reduction of 7-cyano-7-deazaguanine (preQ0) to 7-aminomethyl-7-deazaguanine (preQ1). This chain is NADPH-dependent 7-cyano-7-deazaguanine reductase, found in Bacillus cereus (strain ATCC 14579 / DSM 31 / CCUG 7414 / JCM 2152 / NBRC 15305 / NCIMB 9373 / NCTC 2599 / NRRL B-3711).